A 472-amino-acid polypeptide reads, in one-letter code: Aspartyl/glutamyl-tRNA(Asn/Gln) amidotransferase subunit B (472 aa).

Belongs to the GatB/GatE family. GatB subfamily. As to quaternary structure, heterotrimer of A, B and C subunits.

The enzyme catalyses L-glutamyl-tRNA(Gln) + L-glutamine + ATP + H2O = L-glutaminyl-tRNA(Gln) + L-glutamate + ADP + phosphate + H(+). It carries out the reaction L-aspartyl-tRNA(Asn) + L-glutamine + ATP + H2O = L-asparaginyl-tRNA(Asn) + L-glutamate + ADP + phosphate + 2 H(+). Its function is as follows. Allows the formation of correctly charged Asn-tRNA(Asn) or Gln-tRNA(Gln) through the transamidation of misacylated Asp-tRNA(Asn) or Glu-tRNA(Gln) in organisms which lack either or both of asparaginyl-tRNA or glutaminyl-tRNA synthetases. The reaction takes place in the presence of glutamine and ATP through an activated phospho-Asp-tRNA(Asn) or phospho-Glu-tRNA(Gln). In Sulfolobus acidocaldarius (strain ATCC 33909 / DSM 639 / JCM 8929 / NBRC 15157 / NCIMB 11770), this protein is Aspartyl/glutamyl-tRNA(Asn/Gln) amidotransferase subunit B.